A 653-amino-acid polypeptide reads, in one-letter code: MSTIESVLKETRSFPPSEAFRQQATVSGMQAYNDLCEKANADYEGFWADLARELLSWKKPFTQVFDGSQAPFFKWFADGQLNVSYNCLDRHLEHNANKTAIIYETDDGQVTPISYRSLYEQVCQFANGLKSLGVGKGDRVVIYMPMVPQAIVAMQACARIGAIHSVVFGGFSAGALRDRIQDAAAKVVITANESVRGGKLVPLKATVDEALAMDGCDSIEKVVVLQRTYTPCSMGARDITWDALTAGQPLECEPEWMSAEDPLFILYTSGSTGKPKGIQHSSAGYLLGAANSFRWAFDYKPNDIYWCTADVGWITGHSYICYGPLAMGATQVVFEGIPTYPDAGRFWRMIEQHKVNIFYTAPTAIRSLIKLGADLPKQFDLSSLRVLGTVGEPINPEAWMWYYEVVGGGRCPIVDTWWQTETGSAMIAPMPGAVATKPGSCTLPLPGIMADIVDESGAQVEPGRGGFLVIKKPFPSLVRTIWNDPDRFKKTYFPEEFNGQYYLAGDSANRDESGYFWIMGRIDDVLNVSGHRLGTMEIESALVANPLVAEAAVVGKPHDVKGEAVVAFVVLKGIRPEGDEAKKVAAELKSWVAHEIGKIAQPDDIRFGENLPKTRSGKIMRRLLRSIAKGEEITQDTSTLENPQILDQLQEIA.

CoA contacts are provided by residues Arg196–Lys199 and Thr315. ATP contacts are provided by residues Gly391–Pro393, Asp415–Thr420, Asp506, and Arg521. Ser529 is a CoA binding site. Arg532 serves as a coordination point for ATP. 2 residues coordinate Mg(2+): Val543 and Val548. Position 618 is an N6-acetyllysine (Lys618).

Belongs to the ATP-dependent AMP-binding enzyme family. Mg(2+) serves as cofactor. Acetylated. Deacetylation by the SIR2-homolog deacetylase activates the enzyme.

The enzyme catalyses acetate + ATP + CoA = acetyl-CoA + AMP + diphosphate. In terms of biological role, catalyzes the conversion of acetate into acetyl-CoA (AcCoA), an essential intermediate at the junction of anabolic and catabolic pathways. AcsA undergoes a two-step reaction. In the first half reaction, AcsA combines acetate with ATP to form acetyl-adenylate (AcAMP) intermediate. In the second half reaction, it can then transfer the acetyl group from AcAMP to the sulfhydryl group of CoA, forming the product AcCoA. The sequence is that of Acetyl-coenzyme A synthetase from Laribacter hongkongensis (strain HLHK9).